The chain runs to 309 residues: HPr kinase/phosphorylase (309 aa).

Catalysis depends on residues H138 and K159. An ATP-binding site is contributed by 153–160; that stretch reads GKSGVGKS. S160 is a binding site for Mg(2+). D177 serves as the catalytic Proton acceptor; for phosphorylation activity. Proton donor; for dephosphorylation activity. Residues 201–210 are important for the catalytic mechanism of both phosphorylation and dephosphorylation; the sequence is LEIRGLGIIN. E202 contributes to the Mg(2+) binding site. The active site involves R243. Positions 264–269 are important for the catalytic mechanism of dephosphorylation; the sequence is PVRPGR.

This sequence belongs to the HPrK/P family. As to quaternary structure, homohexamer. Requires Mg(2+) as cofactor.

The catalysed reaction is [HPr protein]-L-serine + ATP = [HPr protein]-O-phospho-L-serine + ADP + H(+). It catalyses the reaction [HPr protein]-O-phospho-L-serine + phosphate + H(+) = [HPr protein]-L-serine + diphosphate. Functionally, catalyzes the ATP- as well as the pyrophosphate-dependent phosphorylation of a specific serine residue in HPr, a phosphocarrier protein of the phosphoenolpyruvate-dependent sugar phosphotransferase system (PTS). HprK/P also catalyzes the pyrophosphate-producing, inorganic phosphate-dependent dephosphorylation (phosphorolysis) of seryl-phosphorylated HPr (P-Ser-HPr). The two antagonistic activities of HprK/P are regulated by several intracellular metabolites, which change their concentration in response to the absence or presence of rapidly metabolisable carbon sources (glucose, fructose, etc.) in the growth medium. Also phosphorylates/dephosphorylates the HPr-like catabolite repression protein crh on a specific serine residue. Therefore, by controlling the phosphorylation state of HPr and crh, HPrK/P is a sensor enzyme that plays a major role in the regulation of carbon metabolism and sugar transport: it mediates carbon catabolite repression (CCR), and regulates PTS-catalyzed carbohydrate uptake and inducer exclusion. This is HPr kinase/phosphorylase from Geobacillus thermodenitrificans (strain NG80-2).